The sequence spans 257 residues: uncharacterized protein (257 aa).

N-linked (GlcNAc...) asparagine; by host glycosylation is found at asparagine 61, asparagine 95, asparagine 102, asparagine 111, asparagine 139, asparagine 148, and asparagine 152. Residues tryptophan 233–isoleucine 253 traverse the membrane as a helical segment.

It is found in the host membrane. The protein localises to the virion. This is an uncharacterized protein from Acanthamoeba polyphaga (Amoeba).